The sequence spans 108 residues: MSWRGRRYRPRRCLRLAQLVGPMLEPSVPEPQQEEPPTESQDHTPGQKREDDQGAAEIQVPNLEADLQELSQSKTGDECGDSPDVQGKILPKSEQFKMPEGGEGKPQL.

The segment at 20 to 108 (VGPMLEPSVP…PEGGEGKPQL (89 aa)) is disordered. Basic and acidic residues-rich tracts occupy residues 40–52 (SQDH…REDD) and 94–108 (EQFK…KPQL).

Belongs to the GAGE family.

This chain is X antigen family member 5 (XAGE5), found in Homo sapiens (Human).